A 256-amino-acid polypeptide reads, in one-letter code: Putative ankyrin repeat protein PAE1861 (256 aa).

ANK repeat units follow at residues 1 to 30, 34 to 63, 67 to 92, 93 to 122, 124 to 151, 155 to 184, 188 to 214, and 218 to 245; these read MDCNNLLNAARRGEAELLTRLLNEGCSPDV, YGRTPLYYAAERGDVGTVDLLIKAGADPNA, EGKTPIIIATQSRKFGVIPLLSASAV, GVEEALYTAARNGCHKAVRYMLARGVRPGA, HGESLLHLVAGDAGLVKLLLEYGVDPNA, HGKTPLHMASEHNCAQCVELLLKRGPDVNV, AGRTPLHYADDVDCIKLLLRYGADLNA, and MGRTPLHYAEDGLAAEALLKRGARPVPD.

This Pyrobaculum aerophilum (strain ATCC 51768 / DSM 7523 / JCM 9630 / CIP 104966 / NBRC 100827 / IM2) protein is Putative ankyrin repeat protein PAE1861.